A 316-amino-acid chain; its full sequence is Transaldolase (316 aa).

The active-site Schiff-base intermediate with substrate is lysine 127.

It belongs to the transaldolase family. Type 2 subfamily.

The protein localises to the cytoplasm. The enzyme catalyses D-sedoheptulose 7-phosphate + D-glyceraldehyde 3-phosphate = D-erythrose 4-phosphate + beta-D-fructose 6-phosphate. Its pathway is carbohydrate degradation; pentose phosphate pathway; D-glyceraldehyde 3-phosphate and beta-D-fructose 6-phosphate from D-ribose 5-phosphate and D-xylulose 5-phosphate (non-oxidative stage): step 2/3. Functionally, transaldolase is important for the balance of metabolites in the pentose-phosphate pathway. In Helicobacter pylori (strain Shi470), this protein is Transaldolase.